The chain runs to 125 residues: MRWQGSSRRKATGGKIIAARGKRKFEMGRESAETRISDVKRKNVHTMGGNRKVRLLQSNVANITNPKDGKTVTATIETVIDNTANKHYVRRNILTKGSVIRTPVGTARVTSRPGQDGVINAVLIE.

It belongs to the eukaryotic ribosomal protein eS8 family. In terms of assembly, part of the 30S ribosomal subunit.

The polypeptide is Small ribosomal subunit protein eS8 (Methanosarcina mazei (strain ATCC BAA-159 / DSM 3647 / Goe1 / Go1 / JCM 11833 / OCM 88) (Methanosarcina frisia)).